Here is a 600-residue protein sequence, read N- to C-terminus: Proton channel OTOP1 (600 aa).

The interval 1 to 50 is disordered; that stretch reads MPGGPGAPSSPAASSGSSRAAPSGIAACPLSPPPLARGSPQASGPRRGAS. At 1–56 the chain is on the cytoplasmic side; sequence MPGGPGAPSSPAASSGSSRAAPSGIAACPLSPPPLARGSPQASGPRRGASVPQKLA. Residues 7–27 show a composition bias toward low complexity; that stretch reads APSSPAASSGSSRAAPSGIAA. Residues 57 to 78 traverse the membrane as a helical segment; it reads ETLSSQYGLNVFVAGLLFLLAW. At 79-86 the chain is on the extracellular side; sequence AVHATGVG. A helical membrane pass occupies residues 87–110; that stretch reads KSDLLCVLTALMLLQLLWMLWYVG. Residues 111–128 are Cytoplasmic-facing; that stretch reads RSYMQRRLIRPKDTHAGA. A helical transmembrane segment spans residues 129–151; sequence RWLRGSITLFAFITVVLGCLKVA. Over 152-161 the chain is Extracellular; that stretch reads YFIGFSECLS. Residues 162-186 form a helical membrane-spanning segment; sequence ATEGVFPVTHAVHTLLQVYFLWGHA. The Cytoplasmic portion of the chain corresponds to 187–194; the sequence is KDIIMSFK. A helical membrane pass occupies residues 195–217; sequence TLERFGVIHSVFTNLLLWANSVL. Topologically, residues 218-262 are extracellular; sequence NESKHQLNEHKERLITLGFGNITIVLDDHTPQCNCTPPALCSALS. A helical transmembrane segment spans residues 263-288; it reads HGIYYLYPFNIEYQILASTMLYVLWK. Topologically, residues 289 to 309 are cytoplasmic; it reads NIGRRVDSSQHQKMQCRFDGV. Residues 310–332 traverse the membrane as a helical segment; the sequence is LVGSVLGLTVLAATIAVVVVYMI. At 333–342 the chain is on the extracellular side; that stretch reads HIGRSKSKSE. The chain crosses the membrane as a helical span at residues 343 to 368; it reads SALIMFYLYAITVLLLMGAAGLVGSW. Residues 369–386 are Cytoplasmic-facing; that stretch reads IYRVDEKSLDESKNPARK. The helical transmembrane segment at 387–411 threads the bilayer; the sequence is LDVDLLVATGSGSWLLSWGSILAIA. The Extracellular segment spans residues 412 to 421; that stretch reads CAETRPPYTW. Residues 422–442 traverse the membrane as a helical segment; sequence YNLPYSVLVIVEKYVQNIFII. The Cytoplasmic portion of the chain corresponds to 443-532; that stretch reads ESVHLEPEGV…QGGMKRRLLR (90 aa). The helical transmembrane segment at 533–551 threads the bilayer; it reads NITAFLFLCNISLWIPPAF. Topologically, residues 552–569 are extracellular; that stretch reads GCRPEYDNGLEEIVFGFE. Residues 570 to 593 traverse the membrane as a helical segment; it reads PWIIVVNLAMPFSIFYRMHAAAAL. The Cytoplasmic portion of the chain corresponds to 594 to 600; sequence FEVYCKI.

Belongs to the otopetrin family. In terms of assembly, homodimer. Interacts with STAT1, independently of STAT1 phosphorylation status. Expressed in thymus, heart, kidney, skin, vestibular system of the inner ear, sour taste cells, heart, uterus, dorsal root ganglion, adrenal gland, lactating mammary gland and stimulated mast cells. In the inner ear, expressed in the supporting cells in extrastriolar regions of the saccule and in the utricle, but not in the cochlea. Expressed in brown adipose tissue. Expressed in epididymal white adipose tissue (eWAT), as well as in inguinal fat, in obese animals, but hardly detectable in eWAT from lean mice. Expressed in acid-sensing taste receptor cells (PKD2L1-positive cells), but not in other types of taste cells (at protein level).

It is found in the cell membrane. The protein localises to the cell projection. The protein resides in the microvillus. The enzyme catalyses H(+)(in) = H(+)(out). With respect to regulation, activated by both acid and alkali, with proton influx in response to extracellular acid and proton efflux during alkali stimulation. Inhibited by Zn(2+); this inhibition is thought to be pH-sensitive. Currents evoked in response to mild acid (pH 6.0) stimulus may also be mildly potentiated by exposure to Zn(2+). Activated by NH(4)Cl. Proton-selective ion channel. Biphasically modulated by acid and alkali, mediating proton influx and efflux in response to extracellular acid and base stimulation, respectively. Sour taste receptor, which carries inward currents in response to extracellular acidification. Sensor for ammonium chloride (NH(4)Cl) in taste receptor cells. NH(4)Cl acts by increasing the intracellular pH, thereby generating a driving force for proton entry through OTOP1 channel. Might also participate in alkaline sensation. Plays a role in the regulation of Ca(2+) flux in response to purigenic (ATP, ADP and UDP) stimuli, leading to increase in cytosolic Ca(2+) due to influx of extracellular calcium. May play this role by inhibiting P2Y purinoceptor-mediated Ca(2+) release in a Ca(2+)-dependent manner and promote an influx of Ca(2+) in response to ATP. Through this mechanism and possibly others, plays a role in the formation and function of calcium carbonate-based structures in the vestibular system of the inner ear, called otoconia, that sense gravity and linear acceleration. In obesity, may attenuate adipose tissue inflammation, through the negative regulation of IFNG signaling, hence may play an adaptive role in the maintainance of metabolic homeostasis. Following alkali activation, may also be permeable Na(+), K(+), Cs(+) and Li(+). This is Proton channel OTOP1 from Mus musculus (Mouse).